The chain runs to 505 residues: Holliday junction branch migration ATPase PINA (505 aa).

The region spanning 2 to 106 is the PINc domain; sequence NDLMLDKSAL…IVTADETQKK (105 aa). The KH domain stretch occupies residues 434 to 505; it reads PVNRGITMSN…NIKIKIKLSD (72 aa). The interval 493 to 505 is required for maximum interaction with Hjc and Hjm; the sequence is KKNNIKIKIKLSD.

Homohexamer; the central pore (25-31 Angstroms) is large enough to hold dsDNA. In PDB:5F4H two of the 6 subunits are in an ATP-binding competent conformation. Interacts with Holliday junction resolvase Hjc; in the presence of HJ DNA this interaction decreases branch migration but not Y-DNA unwinding. Interacts with helicase Hjm (hel308) which decreases the DNA helicase activity of Hjm. Ca(2+) is required as a cofactor.

The enzyme catalyses ATP + H2O = ADP + phosphate + H(+). Its function is as follows. Promotes Holliday junction (HJ) branch migration and unwinds Y-shaped DNA (but not replication forks or dsDNA) in an ATP hydrolysis-dependent manner. Stimulates cleavage by HJ resolvase Hjc. Unwinds Y-shaped and 3'-flap DNA substrates. In the absence of other proteins stabilizes replication forks (prevents spontaneous unwinding); Hjc, Hjm (Hel308) and PINA coordinate HJ migration and cleavage of replication forks in a coordinated way. Inhibits the 5'-3' (but not 3'-5') helicase activity of helicase Hjm (Hel308) on overhang DNA. Probably acts as an ATP-dependent pump that pulls DNA through the hexamer. The chain is Holliday junction branch migration ATPase PINA from Saccharolobus islandicus (strain REY15A) (Sulfolobus islandicus).